The sequence spans 67 residues: Large ribosomal subunit protein bL35 (67 aa).

This sequence belongs to the bacterial ribosomal protein bL35 family.

The polypeptide is Large ribosomal subunit protein bL35 (Agrobacterium fabrum (strain C58 / ATCC 33970) (Agrobacterium tumefaciens (strain C58))).